The chain runs to 513 residues: Histidine ammonia-lyase (513 aa).

The 5-imidazolinone (Ala-Gly) cross-link spans 144–146 (ASG). S145 carries the 2,3-didehydroalanine (Ser) modification.

This sequence belongs to the PAL/histidase family. Post-translationally, contains an active site 4-methylidene-imidazol-5-one (MIO), which is formed autocatalytically by cyclization and dehydration of residues Ala-Ser-Gly.

The protein resides in the cytoplasm. It catalyses the reaction L-histidine = trans-urocanate + NH4(+). It functions in the pathway amino-acid degradation; L-histidine degradation into L-glutamate; N-formimidoyl-L-glutamate from L-histidine: step 1/3. This chain is Histidine ammonia-lyase, found in Streptococcus pyogenes serotype M3 (strain ATCC BAA-595 / MGAS315).